Here is a 117-residue protein sequence, read N- to C-terminus: UPF0295 protein Bsph_0336 (117 aa).

Helical transmembrane passes span 13 to 33 (SFAL…IFFK) and 37 to 57 (ILVL…TVVY).

This sequence belongs to the UPF0295 family.

It is found in the cell membrane. This is UPF0295 protein Bsph_0336 from Lysinibacillus sphaericus (strain C3-41).